A 329-amino-acid chain; its full sequence is Quinolinate synthase (329 aa).

Iminosuccinate-binding residues include histidine 44 and serine 61. Cysteine 106 is a binding site for [4Fe-4S] cluster. Iminosuccinate contacts are provided by residues 132–134 (YIN) and serine 149. A [4Fe-4S] cluster-binding site is contributed by cysteine 192. Iminosuccinate-binding positions include 218–220 (HPE) and threonine 235. Residue cysteine 285 participates in [4Fe-4S] cluster binding.

This sequence belongs to the quinolinate synthase family. Type 2 subfamily. [4Fe-4S] cluster serves as cofactor.

It is found in the plastid. It localises to the cyanelle. The enzyme catalyses iminosuccinate + dihydroxyacetone phosphate = quinolinate + phosphate + 2 H2O + H(+). It functions in the pathway cofactor biosynthesis; NAD(+) biosynthesis; quinolinate from iminoaspartate: step 1/1. Functionally, catalyzes the condensation of iminoaspartate with dihydroxyacetone phosphate to form quinolinate. This is Quinolinate synthase from Cyanophora paradoxa.